A 145-amino-acid chain; its full sequence is LIM domain only protein 3 (145 aa).

2 consecutive LIM zinc-binding domains span residues 11–73 (KGCA…LFGV) and 75–137 (GNCA…GLMK).

The sequence is that of LIM domain only protein 3 (LMO3) from Bos taurus (Bovine).